Consider the following 456-residue polypeptide: Transcription factor bHLH62 (456 aa).

Positions 159–185 (RTNSPFPINNEPPITTNEKMPRVSSSP) are enriched in polar residues. The segment at 159-254 (RTNSPFPINN…KTKSIDPYKD (96 aa)) is disordered. Residues 223–254 (KEIEEKEDSDPKRCKKSEENGDKTKSIDPYKD) are compositionally biased toward basic and acidic residues. The bHLH domain maps to 264 to 314 (QATDSHSLAERVRREKISERMKLLQDLVPGCNKVTGKALMLDEIINYVQSL).

In terms of assembly, homodimer. As to expression, expressed constitutively in roots, leaves, stems, and flowers.

Its subcellular location is the nucleus. This is Transcription factor bHLH62 (BHLH62) from Arabidopsis thaliana (Mouse-ear cress).